The chain runs to 438 residues: Glycerophosphocholine cholinephosphodiesterase ENPP6 (438 aa).

A signal peptide spans 1–22; that stretch reads MTRTLLKIYTLFILLLCRQRDA. Substrate-binding residues include Asp-32, Ser-69, and Asn-90. Zn(2+)-binding residues include Asp-32 and Ser-69. Ser-69 serves as the catalytic Nucleophile. Ser-69 is modified (phosphoserine). Cys-140 and Cys-152 are oxidised to a cystine. Positions 162–226 form a coiled coil; sequence KNLTDSMENA…ILNQKIREKN (65 aa). N-linked (GlcNAc...) asparagine glycosylation is present at Asn-163. Asp-191 lines the substrate pocket. Zn(2+)-binding residues include Asp-191, His-195, Asp-238, and His-239. His-239 is a substrate binding site. 3 N-linked (GlcNAc...) asparagine glycosylation sites follow: Asn-258, Asn-287, and Asn-339. His-352 contributes to the substrate binding site. His-352 lines the Zn(2+) pocket. N-linked (GlcNAc...) asparagine glycosylation occurs at Asn-402. A lipid anchor (GPI-anchor amidated serine) is attached at Ser-415. Residues 416–438 constitute a propeptide, removed in mature form; the sequence is AATAGASLISCCFLLLLTLTGVC.

This sequence belongs to the nucleotide pyrophosphatase/phosphodiesterase family. Zn(2+) serves as cofactor.

The protein resides in the cell membrane. The catalysed reaction is sn-glycerol 3-phosphocholine + H2O = phosphocholine + glycerol + H(+). It carries out the reaction a 1-acyl-sn-glycero-3-phosphocholine + H2O = a 1-acyl-sn-glycerol + phosphocholine + H(+). It catalyses the reaction a 1-O-alkyl-sn-glycero-3-phosphocholine + H2O = a 1-O-alkyl-sn-glycerol + phosphocholine + H(+). The enzyme catalyses 1-dodecanoyl-sn-glycero-3-phosphocholine + H2O = 1-dodecanoyl-sn-glycerol + phosphocholine + H(+). The catalysed reaction is 1-hexadecanoyl-sn-glycero-3-phosphocholine + H2O = 1-hexadecanoyl-sn-glycerol + phosphocholine + H(+). It carries out the reaction 1-(5Z,8Z,11Z,14Z-eicosatetraenoyl)-sn-glycero-3-phosphocholine + H2O = 1-(5Z,8Z,11Z,14Z-eicosatetraenoyl)-sn-glycerol + phosphocholine + H(+). It catalyses the reaction 1-tetradecanoyl-sn-glycero-3-phosphocholine + H2O = 1-tetradecanoyl-sn-glycerol + phosphocholine + H(+). The enzyme catalyses sphing-4-enine-phosphocholine + H2O = sphing-4-enine + phosphocholine + H(+). The catalysed reaction is 1-(9Z-octadecenoyl)-sn-glycero-3-phosphocholine + H2O = 1-(9Z-octadecenoyl)-sn-glycerol + phosphocholine + H(+). It carries out the reaction 1-(9Z,12Z)-octadecadienoyl-sn-glycero-3-phosphocholine + H2O = 1-(9Z,12Z-octadecadienoyl)-sn-glycerol + phosphocholine + H(+). It catalyses the reaction glycero-2-phosphocholine + H2O = phosphocholine + glycerol + H(+). Functionally, choline-specific glycerophosphodiesterase that hydrolyzes glycerophosphocholine (GPC) and lysophosphatidylcholine (LPC) and contributes to supplying choline to the cells. Has a preference for LPC with short (12:0 and 14:0) or polyunsaturated (18:2 and 20:4) fatty acids. In vitro, hydrolyzes only choline-containing lysophospholipids, such as sphingosylphosphorylcholine (SPC), platelet-activating factor (PAF) and lysoPAF, but not other lysophospholipids. The chain is Glycerophosphocholine cholinephosphodiesterase ENPP6 from Danio rerio (Zebrafish).